We begin with the raw amino-acid sequence, 209 residues long: Ribosomal RNA large subunit methyltransferase E (209 aa).

Positions 63, 65, 83, 99, and 124 each coordinate S-adenosyl-L-methionine. Lys-164 acts as the Proton acceptor in catalysis.

This sequence belongs to the class I-like SAM-binding methyltransferase superfamily. RNA methyltransferase RlmE family.

The protein localises to the cytoplasm. It catalyses the reaction uridine(2552) in 23S rRNA + S-adenosyl-L-methionine = 2'-O-methyluridine(2552) in 23S rRNA + S-adenosyl-L-homocysteine + H(+). In terms of biological role, specifically methylates the uridine in position 2552 of 23S rRNA at the 2'-O position of the ribose in the fully assembled 50S ribosomal subunit. This is Ribosomal RNA large subunit methyltransferase E from Yersinia enterocolitica serotype O:8 / biotype 1B (strain NCTC 13174 / 8081).